The primary structure comprises 174 residues: Acetolactate synthase small subunit (174 aa).

An ACT domain is found at 4-78 (TLSVLVQDEA…NILNVQDVTN (75 aa)).

This sequence belongs to the acetolactate synthase small subunit family. In terms of assembly, dimer of large and small chains.

Its subcellular location is the plastid. It is found in the chloroplast. It catalyses the reaction 2 pyruvate + H(+) = (2S)-2-acetolactate + CO2. Its pathway is amino-acid biosynthesis; L-isoleucine biosynthesis; L-isoleucine from 2-oxobutanoate: step 1/4. It participates in amino-acid biosynthesis; L-valine biosynthesis; L-valine from pyruvate: step 1/4. The chain is Acetolactate synthase small subunit (ilvH) from Porphyra purpurea (Red seaweed).